The following is a 91-amino-acid chain: Uteroglobin (91 aa).

The first 21 residues, 1 to 21, serve as a signal peptide directing secretion; that stretch reads MKLAVTLTLVTLALCCSSASA.

Belongs to the secretoglobin family. Antiparallel homodimer; disulfide-linked. Interaction with LMBR1L has been observed in PubMed:16423471, but not in PubMed:23964685. Club cells (nonciliated cells of the surface epithelium of the pulmonary airways).

The protein localises to the secreted. Functionally, binds phosphatidylcholine, phosphatidylinositol, polychlorinated biphenyls (PCB) and weakly progesterone, potent inhibitor of phospholipase A2. This Homo sapiens (Human) protein is Uteroglobin (SCGB1A1).